The sequence spans 414 residues: MKCLCFVVLLAILIAQNSSDLGVKSASSDGFVSRKGVQFILNGKPFYANGFNAYWLAYEATDSTTRFKITYVFQNATIHDLTIVRTWGFRDGGYRALQIAPGVYDEKTFQGLDFAIAEAKRLGIKMIITFVNNYSDFGGRKQYVDWAKNTGQNVSSDDDFYTNPLVKQYYKNHVKTMVNRVNTFTKVEYKDEPTIMGWELMNEPQCRADPSGKTLTAWMNEMALYVKSVDSKHLLSTGLEGFYGDSSPQRKTSLNPVAANVLGTDFIANHKLDAIDFASIHSYPDLWFPNLDEKSRLNLLRKWLECHLEDAQNILKKPLILGEFGKPTNTPGYTQAQRDAVFNATFDTIYESAEKGGPAAGALFWHVISDGMNNFKDPLSIVLSENSTTVNIITEESRKLGLIRGKGKLSKTKI.

The first 19 residues, 1 to 19, serve as a signal peptide directing secretion; the sequence is MKCLCFVVLLAILIAQNSS. Residues Asn17 and Asn75 are each glycosylated (N-linked (GlcNAc...) asparagine). Trp87 is a binding site for substrate. N-linked (GlcNAc...) asparagine glycosylation is found at Asn133 and Asn153. A substrate-binding site is contributed by Asn202. Glu203 (proton donor) is an active-site residue. Tyr283 is a substrate binding site. Glu323 (nucleophile) is an active-site residue. N-linked (GlcNAc...) asparagine glycosylation is present at Asn343. Trp365 is a binding site for substrate. The N-linked (GlcNAc...) asparagine glycan is linked to Asn386.

This sequence belongs to the glycosyl hydrolase 5 (cellulase A) family. In terms of tissue distribution, expressed in leaves, flowers, siliques and seeds.

The protein localises to the secreted. It catalyses the reaction Random hydrolysis of (1-&gt;4)-beta-D-mannosidic linkages in mannans, galactomannans and glucomannans.. The sequence is that of Mannan endo-1,4-beta-mannosidase 3 (MAN3) from Arabidopsis thaliana (Mouse-ear cress).